The primary structure comprises 100 residues: NADH-quinone oxidoreductase subunit K (100 aa).

3 helical membrane passes run V2–V22, L28–A48, and F63–W83.

Belongs to the complex I subunit 4L family. NDH-1 is composed of 14 different subunits. Subunits NuoA, H, J, K, L, M, N constitute the membrane sector of the complex.

The protein localises to the cell inner membrane. It carries out the reaction a quinone + NADH + 5 H(+)(in) = a quinol + NAD(+) + 4 H(+)(out). In terms of biological role, NDH-1 shuttles electrons from NADH, via FMN and iron-sulfur (Fe-S) centers, to quinones in the respiratory chain. The immediate electron acceptor for the enzyme in this species is believed to be ubiquinone. Couples the redox reaction to proton translocation (for every two electrons transferred, four hydrogen ions are translocated across the cytoplasmic membrane), and thus conserves the redox energy in a proton gradient. The protein is NADH-quinone oxidoreductase subunit K of Wolinella succinogenes (strain ATCC 29543 / DSM 1740 / CCUG 13145 / JCM 31913 / LMG 7466 / NCTC 11488 / FDC 602W) (Vibrio succinogenes).